The sequence spans 832 residues: WD repeat-containing protein 75 (832 aa).

13 WD repeats span residues Gln-4 to Ser-43, Glu-47 to Asp-86, Gly-90 to Ser-131, Lys-145 to Lys-184, Leu-193 to Arg-230, Lys-236 to Pro-275, Ser-278 to Asp-317, Ser-323 to Ser-361, Gln-375 to Glu-424, Ser-431 to Met-477, Ser-490 to Glu-528, Trp-532 to Asn-572, and Ala-577 to Gln-614. A disordered region spans residues Ser-764–Phe-798.

Component of the proposed t-UTP subcomplex of the ribosomal small subunit (SSU) processome. SSU processome is composed of more than 70 proteins and the RNA chaperone small nucleolar RNA (snoRNA) U3.

It is found in the nucleus. The protein localises to the nucleolus. Ribosome biogenesis factor. Part of the small subunit (SSU) processome, first precursor of the small eukaryotic ribosomal subunit. During the assembly of the SSU processome in the nucleolus, many ribosome biogenesis factors, an RNA chaperone and ribosomal proteins associate with the nascent pre-rRNA and work in concert to generate RNA folding, modifications, rearrangements and cleavage as well as targeted degradation of pre-ribosomal RNA by the RNA exosome. Involved in nucleolar processing of pre-18S ribosomal RNA. Required for optimal pre-ribosomal RNA transcription by RNA polymerase I. This chain is WD repeat-containing protein 75 (wdr75), found in Xenopus laevis (African clawed frog).